The sequence spans 332 residues: Formamidase (332 aa).

In terms of domain architecture, CN hydrolase spans 14-259; sequence FLTALIQYPV…WEIVTAEVYP (246 aa). The active-site Proton acceptor is glutamate 60. Lysine 132 functions as the Proton donor in the catalytic mechanism. Cysteine 165 (nucleophile) is an active-site residue.

Belongs to the carbon-nitrogen hydrolase superfamily. Aliphatic amidase family.

It carries out the reaction formamide + H2O = formate + NH4(+). Functionally, is an aliphatic amidase with a restricted substrate specificity, as it only hydrolyzes formamide. The chain is Formamidase from Bacillus cereus (strain B4264).